The primary structure comprises 154 residues: Transcription antitermination protein NusB (154 aa).

The protein belongs to the NusB family.

Functionally, involved in transcription antitermination. Required for transcription of ribosomal RNA (rRNA) genes. Binds specifically to the boxA antiterminator sequence of the ribosomal RNA (rrn) operons. The polypeptide is Transcription antitermination protein NusB (Methylobacillus flagellatus (strain ATCC 51484 / DSM 6875 / VKM B-1610 / KT)).